Consider the following 392-residue polypeptide: Cytochrome P450 monooxygenase ppzE (392 aa).

A helical membrane pass occupies residues 10–30; that stretch reads LELVWFVALYPFACWTLFAVL. N-linked (GlcNAc...) asparagine glycosylation is present at Asn-319. A heme-binding site is contributed by Cys-353. A glycan (N-linked (GlcNAc...) asparagine) is linked at Asn-372.

It belongs to the cytochrome P450 family. Heme serves as cofactor.

Its subcellular location is the membrane. Its pathway is secondary metabolite biosynthesis. Its function is as follows. Cytochrome P450 monooxygenase; part of the gene cluster that mediates the biosynthesis of pyrrolopyrazines, secondary metabolites showing insecticidal activity. The role of ppzE within the pathway has still to be determined. The single multifunctional NRPS ppzA is sufficient to produce peramine via condensation of 1-pyrroline-5-carboxylate and arginine, N-methylation of the alpha-amino group of arginine and reduction of the thioester and the cyclization to form an iminium ion resulting in release from the peptide synthetase. Deprotonation of this intermediate and oxidation of the pyrroline ring would give rise to peramine. In Epichloe species that produce only peramine, the peramine synthetase gene is not localized in a gene cluster, in contrast to Metarhizium species that contain additional pyrrolopyrazine biosynthesis genes. The 2-oxoglutarate-Fe(II) type oxidoreductase ppzC hydroxylates peramine to yield the newly identified compound 8-hydroxyperamine whereas ppzD converts L-proline into trans-4-hydroxy-L-proline, a precursor of peramine biosynthesis. This chain is Cytochrome P450 monooxygenase ppzE, found in Metarhizium rileyi (strain RCEF 4871) (Nomuraea rileyi).